The following is a 529-amino-acid chain: BTB/POZ domain-containing protein 6 (529 aa).

Residues 127–197 (ADVHFIVGPA…LYSDEIDLEA (71 aa)) form the BTB domain.

In terms of assembly, homodimer and heterodimer. Interacts with cul3 via the BTB domain.

It is found in the cytoplasm. In terms of biological role, adapter protein for the cul3 E3 ubiquitin-protein ligase complex. Involved in late neuronal development and muscle formation. The chain is BTB/POZ domain-containing protein 6 (btbd6) from Xenopus laevis (African clawed frog).